The following is a 186-amino-acid chain: FMN reductase (NADPH) (186 aa).

This sequence belongs to the SsuE family.

It carries out the reaction FMNH2 + NADP(+) = FMN + NADPH + 2 H(+). The sequence is that of FMN reductase (NADPH) (msuE) from Pseudomonas aeruginosa (strain ATCC 15692 / DSM 22644 / CIP 104116 / JCM 14847 / LMG 12228 / 1C / PRS 101 / PAO1).